Reading from the N-terminus, the 196-residue chain is Ribonuclease HII (196 aa).

The RNase H type-2 domain occupies 1–196 (MVTIGVDEAG…FAPVAQLQLL (196 aa)). A divalent metal cation contacts are provided by Asp-7, Glu-8, and Asp-103.

The protein belongs to the RNase HII family. Requires Mn(2+) as cofactor. It depends on Mg(2+) as a cofactor.

Its subcellular location is the cytoplasm. It carries out the reaction Endonucleolytic cleavage to 5'-phosphomonoester.. Its function is as follows. Endonuclease that specifically degrades the RNA of RNA-DNA hybrids. In Novosphingobium aromaticivorans (strain ATCC 700278 / DSM 12444 / CCUG 56034 / CIP 105152 / NBRC 16084 / F199), this protein is Ribonuclease HII.